Reading from the N-terminus, the 405-residue chain is MIQWFLKYRPRSLKDVENQDGAKKELQEWIESWLNGKPNAKAVLLHGPPGVGKTTLAEALAHDYNLELLEMNASDSRKLQDIKGVAEKASVYGSIFGTRGKLILLDEVDGINVREDTGAIQGILELIEKTKYPIIMTANDPWNPALRELRNKTKMVGLNKLGKYPLRRLLKKICQAEKIICDDEALNYIIDTSEGDARYAINMLQGIGEGYGKVTLDLVEAMARRKERELDPFETLRDIFWARYAWQAKNAATSAQIDYDMLIRWISENIPIQYDNIEDVWRAFDALSRASIFLKRAKGGDWDLLSYAYDLMSSGVAAAEIEKKKPNWKPKWKKYQFPSYIQLLSKSKDIRDTRDEIIKKLAIHSSFNKTLNDTYPFFLIFYKKYDKRLSLNTKEKEYLNSASKS.

47–54 (GPPGVGKT) provides a ligand contact to ATP.

Belongs to the activator 1 small subunits family. RfcL subfamily. As to quaternary structure, heteromultimer composed of small subunits (RfcS) and large subunits (RfcL).

Part of the RFC clamp loader complex which loads the PCNA sliding clamp onto DNA. The protein is Replication factor C large subunit of Saccharolobus islandicus (strain L.S.2.15 / Lassen #1) (Sulfolobus islandicus).